The primary structure comprises 259 residues: Short chain dehydrogenase ausX (259 aa).

6 residues coordinate NADP(+): Ile-13, Asp-59, Arg-121, Tyr-153, Lys-157, and Val-186. The Proton acceptor role is filled by Tyr-153. The active-site Proton donor is the Tyr-153. The Lowers pKa of active site Tyr role is filled by Lys-157.

It belongs to the short-chain dehydrogenases/reductases (SDR) family.

The protein operates within secondary metabolite biosynthesis; terpenoid biosynthesis. Short chain dehydrogenase; part of the gene cluster A that mediates the biosynthesis of the fungal meroterpenoid acetoxydehydroaustin. The first step of the pathway is the synthesis of 3,5-dimethylorsellinic acid by the polyketide synthase ausA. 3,5-dimethylorsellinic acid is then prenylated by the polyprenyl transferase ausN. Further epoxidation by the FAD-dependent monooxygenase ausM and cyclization by the probable terpene cyclase ausL lead to the formation of protoaustinoid A. Protoaustinoid A is then oxidized to spiro-lactone preaustinoid A3 by the combined action of the FAD-binding monooxygenases ausB and ausC, and the dioxygenase ausE. Acid-catalyzed keto-rearrangement and ring contraction of the tetraketide portion of preaustinoid A3 by ausJ lead to the formation of preaustinoid A4. The aldo-keto reductase ausK, with the help of ausH, is involved in the next step by transforming preaustinoid A4 into isoaustinone which is in turn hydroxylated by the P450 monooxygenase ausI to form austinolide. The cytochrome P450 monooxygenase ausG then modifies austinolide to austinol. Austinol is further acetylated to austin by the O-acetyltransferase ausP, which spontaneously changes to dehydroaustin. The cytochrome P450 monooxygenase then converts dehydroaustin is into 7-dehydrodehydroaustin. The hydroxylation catalyzed by ausR permits the second O-acetyltransferase ausQ to add an additional acetyl group to the molecule, leading to the formation of acetoxydehydroaustin. Due to genetic rearrangements of the clusters and the subsequent loss of some enzymes, the end product of the Penicillium brasilianum austinoid biosynthesis clusters is acetoxydehydroaustin. In Penicillium brasilianum, this protein is Short chain dehydrogenase ausX.